The primary structure comprises 57 residues: Large ribosomal subunit protein bL32 (57 aa).

The protein belongs to the bacterial ribosomal protein bL32 family.

This is Large ribosomal subunit protein bL32 from Staphylococcus aureus (strain MSSA476).